The following is a 147-amino-acid chain: Small ribosomal subunit protein uS12 (147 aa).

This sequence belongs to the universal ribosomal protein uS12 family. As to quaternary structure, part of the 30S ribosomal subunit.

In terms of biological role, with S4 and S5 plays an important role in translational accuracy. Located at the interface of the 30S and 50S subunits. This Hyperthermus butylicus (strain DSM 5456 / JCM 9403 / PLM1-5) protein is Small ribosomal subunit protein uS12.